A 108-amino-acid chain; its full sequence is Thiosulfate sulfurtransferase GlpE (108 aa).

The Rhodanese domain maps to 18–106; that stretch reads ENEGATLADI…WERSGLPIET (89 aa). The active-site Cysteine persulfide intermediate is the Cys66.

The protein belongs to the GlpE family.

The protein localises to the cytoplasm. It carries out the reaction thiosulfate + hydrogen cyanide = thiocyanate + sulfite + 2 H(+). It catalyses the reaction thiosulfate + [thioredoxin]-dithiol = [thioredoxin]-disulfide + hydrogen sulfide + sulfite + 2 H(+). Its function is as follows. Transferase that catalyzes the transfer of sulfur from thiosulfate to thiophilic acceptors such as cyanide or dithiols. May function in a CysM-independent thiosulfate assimilation pathway by catalyzing the conversion of thiosulfate to sulfite, which can then be used for L-cysteine biosynthesis. In Actinobacillus pleuropneumoniae serotype 5b (strain L20), this protein is Thiosulfate sulfurtransferase GlpE.